A 129-amino-acid polypeptide reads, in one-letter code: Follitropin subunit beta (129 aa).

The N-terminal stretch at Met1 to Ser20 is a signal peptide. Disulfide bonds link Cys21/Cys69, Cys35/Cys84, Cys38/Cys122, Cys46/Cys100, Cys50/Cys102, and Cys105/Cys112. N-linked (GlcNAc...) asparagine glycosylation is found at Asn25 and Asn42.

This sequence belongs to the glycoprotein hormones subunit beta family. Heterodimer. The active follitropin is a heterodimer composed of an alpha chain/CGA shared with other hormones and a unique beta chain/FSHB shown here.

The protein localises to the secreted. In terms of biological role, together with the alpha chain CGA constitutes follitropin, the follicle-stimulating hormone, and provides its biological specificity to the hormone heterodimer. Binds FSHR, a G protein-coupled receptor, on target cells to activate downstream signaling pathways. Follitropin is involved in follicle development and spermatogenesis in reproductive organs. This chain is Follitropin subunit beta (FSHB), found in Saimiri boliviensis boliviensis (Bolivian squirrel monkey).